The following is a 76-amino-acid chain: Large ribosomal subunit protein bL31 (76 aa).

The Zn(2+) site is built by Cys-16, Cys-18, Cys-36, and Cys-39.

Belongs to the bacterial ribosomal protein bL31 family. Type A subfamily. Part of the 50S ribosomal subunit. It depends on Zn(2+) as a cofactor.

Binds the 23S rRNA. The protein is Large ribosomal subunit protein bL31 of Syntrophobacter fumaroxidans (strain DSM 10017 / MPOB).